The chain runs to 87 residues: NAD(P)H-quinone oxidoreductase subunit O (87 aa).

Over residues 1–10 the composition is skewed to basic and acidic residues; sequence MSEQTGKVDD. The interval 1 to 23 is disordered; sequence MSEQTGKVDDSQSPPKVQKKLRK.

The protein belongs to the complex I NdhO subunit family. As to quaternary structure, NDH-1 can be composed of about 15 different subunits; different subcomplexes with different compositions have been identified which probably have different functions.

It is found in the cellular thylakoid membrane. The enzyme catalyses a plastoquinone + NADH + (n+1) H(+)(in) = a plastoquinol + NAD(+) + n H(+)(out). The catalysed reaction is a plastoquinone + NADPH + (n+1) H(+)(in) = a plastoquinol + NADP(+) + n H(+)(out). In terms of biological role, NDH-1 shuttles electrons from an unknown electron donor, via FMN and iron-sulfur (Fe-S) centers, to quinones in the respiratory and/or the photosynthetic chain. The immediate electron acceptor for the enzyme in this species is believed to be plastoquinone. Couples the redox reaction to proton translocation, and thus conserves the redox energy in a proton gradient. Cyanobacterial NDH-1 also plays a role in inorganic carbon-concentration. This is NAD(P)H-quinone oxidoreductase subunit O from Prochlorococcus marinus (strain NATL2A).